A 294-amino-acid chain; its full sequence is Casein kinase II subunit beta (294 aa).

Disordered regions lie at residues 66 to 90 (DHNT…SKRN) and 269 to 294 (KRME…MASE). Residues 70 to 87 (DNTTTNTSNNNDSRNGTS) show a composition bias toward low complexity. Residues 273–288 (EDDEEEEDEVEEEDDD) show a composition bias toward acidic residues.

It belongs to the casein kinase 2 subunit beta family. Tetramer composed of two alpha chains, one beta chain and one beta' chain. Phosphorylated by alpha subunit.

Its function is as follows. Regulatory subunit of casein kinase II/CK2. As part of the kinase complex regulates the basal catalytic activity of the alpha subunit a constitutively active serine/threonine-protein kinase that phosphorylates a large number of substrates containing acidic residues C-terminal to the phosphorylated serine or threonine. In Candida albicans (Yeast), this protein is Casein kinase II subunit beta (CKB1).